The following is a 245-amino-acid chain: 1-(5-phosphoribosyl)-5-[(5-phosphoribosylamino)methylideneamino] imidazole-4-carboxamide isomerase (245 aa).

Residue Asp-7 is the Proton acceptor of the active site. Asp-129 acts as the Proton donor in catalysis.

It belongs to the HisA/HisF family.

Its subcellular location is the cytoplasm. It carries out the reaction 1-(5-phospho-beta-D-ribosyl)-5-[(5-phospho-beta-D-ribosylamino)methylideneamino]imidazole-4-carboxamide = 5-[(5-phospho-1-deoxy-D-ribulos-1-ylimino)methylamino]-1-(5-phospho-beta-D-ribosyl)imidazole-4-carboxamide. Its pathway is amino-acid biosynthesis; L-histidine biosynthesis; L-histidine from 5-phospho-alpha-D-ribose 1-diphosphate: step 4/9. This Shewanella loihica (strain ATCC BAA-1088 / PV-4) protein is 1-(5-phosphoribosyl)-5-[(5-phosphoribosylamino)methylideneamino] imidazole-4-carboxamide isomerase.